The following is a 610-amino-acid chain: Aspercryptin biosynthesis cluster-specific transcription regulator atnN (610 aa).

Polar residues predominate over residues 1-26; sequence MAPKDSQVSASNEMTGNPPSSVQGRS. The interval 1–27 is disordered; sequence MAPKDSQVSASNEMTGNPPSSVQGRSR. The segment at residues 30-57 is a DNA-binding region (zn(2)-C6 fungal-type); the sequence is CITCRIRRVKCDEERPHCRRCQSTGRKC. 2 disordered regions span residues 61 to 81 and 427 to 493; these read TPLT…KAGS and AGST…LPRP. Composition is skewed to low complexity over residues 66 to 79 and 437 to 474; these read QQPK…AAKA and SRAG…TPTP.

The protein resides in the nucleus. Transcription factor that positively regulates the cluster that mediate the production of aspercryptins, linear lipopeptides built from six amino acids including 2 highly unusual and nonproteogenic amino acids, 2-amino-octanoic acid (2aoa) and 2-amino-dodecanol (2adol). This chain is Aspercryptin biosynthesis cluster-specific transcription regulator atnN, found in Emericella nidulans (strain FGSC A4 / ATCC 38163 / CBS 112.46 / NRRL 194 / M139) (Aspergillus nidulans).